Consider the following 274-residue polypeptide: Dermonecrotic toxin LspiSicTox-betaIII1 G (274 aa).

The active site involves His5. Mg(2+) is bound by residues Glu25 and Asp27. Residue His41 is the Nucleophile of the active site. 2 disulfides stabilise this stretch: Cys45–Cys51 and Cys47–Cys189. The N-linked (GlcNAc...) asparagine glycan is linked to Asn66. Residue Asp85 coordinates Mg(2+).

The protein belongs to the arthropod phospholipase D family. Class II subfamily. The cofactor is Mg(2+). In terms of tissue distribution, expressed by the venom gland.

Its subcellular location is the secreted. It carries out the reaction an N-(acyl)-sphingosylphosphocholine = an N-(acyl)-sphingosyl-1,3-cyclic phosphate + choline. The catalysed reaction is an N-(acyl)-sphingosylphosphoethanolamine = an N-(acyl)-sphingosyl-1,3-cyclic phosphate + ethanolamine. It catalyses the reaction a 1-acyl-sn-glycero-3-phosphocholine = a 1-acyl-sn-glycero-2,3-cyclic phosphate + choline. The enzyme catalyses a 1-acyl-sn-glycero-3-phosphoethanolamine = a 1-acyl-sn-glycero-2,3-cyclic phosphate + ethanolamine. Functionally, dermonecrotic toxins cleave the phosphodiester linkage between the phosphate and headgroup of certain phospholipids (sphingolipid and lysolipid substrates), forming an alcohol (often choline) and a cyclic phosphate. This toxin acts on sphingomyelin (SM). It may also act on ceramide phosphoethanolamine (CPE), lysophosphatidylcholine (LPC) and lysophosphatidylethanolamine (LPE), but not on lysophosphatidylserine (LPS), and lysophosphatidylglycerol (LPG). It acts by transphosphatidylation, releasing exclusively cyclic phosphate products as second products. Induces dermonecrosis, hemolysis, increased vascular permeability, edema, inflammatory response, and platelet aggregation. The chain is Dermonecrotic toxin LspiSicTox-betaIII1 G from Loxosceles spinulosa (Recluse spider).